The following is a 1070-amino-acid chain: Carbamoyl phosphate synthase large chain (1070 aa).

A carboxyphosphate synthetic domain region spans residues 1 to 401; that stretch reads MPKRDDIKTI…ALLKAVRSLE (401 aa). ATP contacts are provided by R129, R169, G175, G176, K208, I210, E215, G241, I242, H243, Q284, and E298. The region spanning 133–327 is the ATP-grasp 1 domain; the sequence is RDLMNELGEP…IAKLAAKIAV (195 aa). Positions 284, 298, and 300 each coordinate Mg(2+). Mn(2+) is bound by residues Q284, E298, and N300. Positions 402 to 546 are oligomerization domain; that stretch reads IGADHLLLEE…YSTYEEENES (145 aa). Positions 547-929 are carbamoyl phosphate synthetic domain; it reads TRSAKESVIV…ALYKGFVASG (383 aa). Residues 671-861 enclose the ATP-grasp 2 domain; it reads EKALEILQIP…MANVATRVIL (191 aa). Positions 707, 746, 748, 752, 777, 778, 779, 780, 820, and 832 each coordinate ATP. Residues Q820, E832, and N834 each coordinate Mg(2+). 3 residues coordinate Mn(2+): Q820, E832, and N834. The MGS-like domain occupies 930-1070; the sequence is TTMHDYGTVL…SEVKQPKARV (141 aa). The interval 930 to 1070 is allosteric domain; the sequence is TTMHDYGTVL…SEVKQPKARV (141 aa).

Belongs to the CarB family. Composed of two chains; the small (or glutamine) chain promotes the hydrolysis of glutamine to ammonia, which is used by the large (or ammonia) chain to synthesize carbamoyl phosphate. Tetramer of heterodimers (alpha,beta)4. Requires Mg(2+) as cofactor. The cofactor is Mn(2+).

It carries out the reaction hydrogencarbonate + L-glutamine + 2 ATP + H2O = carbamoyl phosphate + L-glutamate + 2 ADP + phosphate + 2 H(+). It catalyses the reaction hydrogencarbonate + NH4(+) + 2 ATP = carbamoyl phosphate + 2 ADP + phosphate + 2 H(+). It participates in amino-acid biosynthesis; L-arginine biosynthesis; carbamoyl phosphate from bicarbonate: step 1/1. It functions in the pathway pyrimidine metabolism; UMP biosynthesis via de novo pathway; (S)-dihydroorotate from bicarbonate: step 1/3. Functionally, large subunit of the glutamine-dependent carbamoyl phosphate synthetase (CPSase). CPSase catalyzes the formation of carbamoyl phosphate from the ammonia moiety of glutamine, carbonate, and phosphate donated by ATP, constituting the first step of 2 biosynthetic pathways, one leading to arginine and/or urea and the other to pyrimidine nucleotides. The large subunit (synthetase) binds the substrates ammonia (free or transferred from glutamine from the small subunit), hydrogencarbonate and ATP and carries out an ATP-coupled ligase reaction, activating hydrogencarbonate by forming carboxy phosphate which reacts with ammonia to form carbamoyl phosphate. This is Carbamoyl phosphate synthase large chain from Listeria monocytogenes serotype 4b (strain F2365).